The primary structure comprises 490 residues: B3 domain-containing protein REM14 (490 aa).

3 DNA-binding regions (TF-B3) span residues 3–95 (NQHF…LGPS), 130–226 (CFSA…LPKG), and 236–333 (CFVA…LSNE). The interval 343 to 367 (NEVESLSTDQESHEESSHNEKISRR) is disordered. The span at 352-364 (QESHEESSHNEKI) shows a compositional bias: basic and acidic residues. Residues 387–484 (FVTLNLTPYN…TSCVLKFCSK (98 aa)) constitute a DNA-binding region (TF-B3 4).

The protein resides in the nucleus. The polypeptide is B3 domain-containing protein REM14 (REM14) (Arabidopsis thaliana (Mouse-ear cress)).